Reading from the N-terminus, the 366-residue chain is NADH-quinone oxidoreductase subunit D (366 aa).

This sequence belongs to the complex I 49 kDa subunit family. In terms of assembly, NDH-1 is composed of 14 different subunits. Subunits NuoB, C, D, E, F, and G constitute the peripheral sector of the complex.

Its subcellular location is the cell membrane. It carries out the reaction a quinone + NADH + 5 H(+)(in) = a quinol + NAD(+) + 4 H(+)(out). NDH-1 shuttles electrons from NADH, via FMN and iron-sulfur (Fe-S) centers, to quinones in the respiratory chain. The immediate electron acceptor for the enzyme in this species is believed to be a menaquinone. Couples the redox reaction to proton translocation (for every two electrons transferred, four hydrogen ions are translocated across the cytoplasmic membrane), and thus conserves the redox energy in a proton gradient. In Bacillus thuringiensis (strain Al Hakam), this protein is NADH-quinone oxidoreductase subunit D.